Reading from the N-terminus, the 244-residue chain is tRNA (guanine-N(7)-)-methyltransferase (244 aa).

The tract at residues 1–20 (MTNPFDSAGSKAPPKPFTVS) is disordered. Glu75, Glu100, Asp127, and Asp150 together coordinate S-adenosyl-L-methionine. Residue Asp150 is part of the active site. Lys154 serves as a coordination point for substrate. The interval 156–161 (RHNKRR) is interaction with RNA. Substrate contacts are provided by residues Asp186 and 223–226 (THFE).

It belongs to the class I-like SAM-binding methyltransferase superfamily. TrmB family.

It carries out the reaction guanosine(46) in tRNA + S-adenosyl-L-methionine = N(7)-methylguanosine(46) in tRNA + S-adenosyl-L-homocysteine. It functions in the pathway tRNA modification; N(7)-methylguanine-tRNA biosynthesis. Functionally, catalyzes the formation of N(7)-methylguanine at position 46 (m7G46) in tRNA. This is tRNA (guanine-N(7)-)-methyltransferase from Stenotrophomonas maltophilia (strain K279a).